The chain runs to 112 residues: Thioredoxin-like protein YdfQ (112 aa).

The 107-residue stretch at 1–107 folds into the Thioredoxin domain; it reads MKEMTGLHSL…LEQKLKRVYR (107 aa). A disulfide bond links C32 and C35.

The polypeptide is Thioredoxin-like protein YdfQ (ydfQ) (Bacillus subtilis (strain 168)).